The sequence spans 364 residues: MPTIENEPKLDFKDVLLRPKRSTLKSRADVDLVREFVFRNSKKKYVGIPIVASNMDTVGTFEVAESLSKKRLFTTIHKHYSVDQWMEFVNRISSNQDILSQIGISSGISDYDFTKLKKICGLIPELQYICLDVANGYSEVFVDFIRRVREEFPRHTIFAGNVVTGEMTEELILSGADVVKVGIGSGSVCTTRKKAGVGYPQLSAVLECADASHGLNGHVMSDGGCTNPGDVAKALGAGADFVMIGGLFAGHDQCGGDTVEKDGQKYKLFYGMSSDTAMEKHEGSVAEYRASEGKTITVPYRGDISKTVQDLLGGLRSACTYTGAKKLKELSKRATFVRVTQQTNEQYATFEISPSELQNLNIAV.

Residues Ser-26–Arg-27, Lys-78, Asp-132–Ala-134, and Ile-183–Gly-184 contribute to the NADP(+) site. Residues Gly-184, Gly-186, and Cys-189 each contribute to the K(+) site. Residue Cys-189 is the Thioimidate intermediate of the active site. Residue Thr-191 is the Proton donor/acceptor of the active site. Arg-192 contacts K(+). GMP contacts are provided by residues Asp-222–Gly-224, Gly-245–Gly-246, Gly-271–Ser-273, and Arg-289–Gly-293. NADP(+) contacts are provided by residues Met-272, Tyr-288 to Arg-289, and Ser-317 to Thr-320.

The protein belongs to the IMPDH/GMPR family. GuaC type 1 subfamily. As to quaternary structure, homotetramer.

The enzyme catalyses IMP + NH4(+) + NADP(+) = GMP + NADPH + 2 H(+). Functionally, catalyzes the irreversible NADPH-dependent deamination of GMP to IMP. It functions in the conversion of nucleobase, nucleoside and nucleotide derivatives of G to A nucleotides, and in maintaining the intracellular balance of A and G nucleotides. This chain is GMP reductase (gmr-1), found in Onchocerca volvulus.